A 598-amino-acid chain; its full sequence is UvrABC system protein C (598 aa).

The GIY-YIG domain maps to 14 to 91 (DSPGCYLHKD…IQKNMPKYNI (78 aa)). The UVR domain occupies 196 to 231 (DKIIEDLRSKMLAASKEMAFERAAEYRDLISGIATM).

It belongs to the UvrC family. In terms of assembly, interacts with UvrB in an incision complex.

Its subcellular location is the cytoplasm. In terms of biological role, the UvrABC repair system catalyzes the recognition and processing of DNA lesions. UvrC both incises the 5' and 3' sides of the lesion. The N-terminal half is responsible for the 3' incision and the C-terminal half is responsible for the 5' incision. This Streptococcus pyogenes serotype M1 protein is UvrABC system protein C.